Consider the following 411-residue polypeptide: Zinc-regulated GTPase metalloprotein activator 1 (411 aa).

A psi-PxLVp motif motif is present at residues 9–16 (SEIPQLVD). 68-75 (GFLGAGKT) contacts GTP. Positions 127, 129, and 130 each coordinate Zn(2+). The short motif at 127 to 130 (CMCC) is the CXCC motif element. Residues 130–134 (CTVKD) and 218–221 (NKTD) contribute to the GTP site. Positions 307–411 (ISTHTFKLPP…RISPFVVGNQ (105 aa)) constitute a CobW C-terminal domain.

Belongs to the SIMIBI class G3E GTPase family. ZNG1 subfamily.

It carries out the reaction GTP + H2O = GDP + phosphate + H(+). In terms of biological role, zinc chaperone that directly transfers zinc cofactor to target metalloproteins, thereby activating them. Catalyzes zinc insertion into the active site of methionine aminopeptidase map1, which function to cleave the initiator methionine from polypeptides during or after protein translation. Mechanistically, the N-terminal psi-PxLVp motif binds to the C6H2-type zinc finger of inactive form of map1. After formation of the docked complex, zinc is transferred from the CXCC motif in the GTPase domain of zng1 to the zinc binding site in the peptidase domain of map1 in a process requiring GTP hydrolysis. GTP/GDP exchange is required for release of active map1. This chain is Zinc-regulated GTPase metalloprotein activator 1 (zng1), found in Schizosaccharomyces pombe (strain 972 / ATCC 24843) (Fission yeast).